The sequence spans 311 residues: MLNNILKIATRQSPLAIWQANYVRNQLLSFYPTLLIELVPIVTSGDLILDKPLMKAGGKRLFIKELEQAMLERRADIAVHSMKDITISFPEGIGLAVLCAREDPRDAFISTHYASIDLLPTGAVVGTSSMRRQCQLRERRPDLVMRDLRGNIGTRLEKLDKGEYDALILAAAGLKRLDLAHRIRMIIDPTELLPAVGQGVIGIEYRLEDTHILSILAPLHHSATALRVSAERAMNAKLAGGCQVPIGSYAEIEGDQIWLRALVGSPDGSLIIRSEGRAPLSQAEILGQSIANDLLYRGAESILCRAFQVDS.

At Cys-242 the chain carries S-(dipyrrolylmethanemethyl)cysteine.

This sequence belongs to the HMBS family. As to quaternary structure, monomer. The cofactor is dipyrromethane.

It catalyses the reaction 4 porphobilinogen + H2O = hydroxymethylbilane + 4 NH4(+). It participates in porphyrin-containing compound metabolism; protoporphyrin-IX biosynthesis; coproporphyrinogen-III from 5-aminolevulinate: step 2/4. Its function is as follows. Tetrapolymerization of the monopyrrole PBG into the hydroxymethylbilane pre-uroporphyrinogen in several discrete steps. This is Porphobilinogen deaminase from Baumannia cicadellinicola subsp. Homalodisca coagulata.